We begin with the raw amino-acid sequence, 122 residues long: Small ribosomal subunit protein uS12 (122 aa).

It belongs to the universal ribosomal protein uS12 family. As to quaternary structure, part of the 30S ribosomal subunit. Contacts proteins S8 and S17. May interact with IF1 in the 30S initiation complex.

Its function is as follows. With S4 and S5 plays an important role in translational accuracy. In terms of biological role, interacts with and stabilizes bases of the 16S rRNA that are involved in tRNA selection in the A site and with the mRNA backbone. Located at the interface of the 30S and 50S subunits, it traverses the body of the 30S subunit contacting proteins on the other side and probably holding the rRNA structure together. The combined cluster of proteins S8, S12 and S17 appears to hold together the shoulder and platform of the 30S subunit. The polypeptide is Small ribosomal subunit protein uS12 (Corynebacterium efficiens (strain DSM 44549 / YS-314 / AJ 12310 / JCM 11189 / NBRC 100395)).